Consider the following 366-residue polypeptide: MDSDDEMVEEAVEGHLDDDGLPHGFCTVTYSSTDRFEGNFVHGEKNGRGKFFFFDGSTLEGYYVDDALQGQGVYTYEDGGVLQGTYVDGELNGPAQEYDTDGRLIFKGQYKDNIRHGVCWIYYPDGGSLVGEVNEDGEMTGEKIAYVYPDERTALYGKFIDGEMIEGKLATLMSTEEGRPHFELMPGNSVYHFDKSTSSCISTNALLPDPYESERVYVAESLISSAGEGLFSKVAVGPNTVMSFYNGVRITHQEVDSRDWALNGNTLSLDEETVIDVPEPYNHVSKYCASLGHKANHSFTPNCIYDMFVHPRFGPIKCIRTLRAVEADEELTVAYGYDHSPPGKSGPEAPEWYQVELKAFQATQQK.

MORN repeat units follow at residues 36-58, 59-81, and 106-128; these read FEGNFVHGEKNGRGKFFFFDGST, LEGYYVDDALQGQGVYTYEDGGV, and FKGQYKDNIRHGVCWIYYPDGGS. The 123-residue stretch at 214 to 336 folds into the SET domain; sequence ERVYVAESLI…ADEELTVAYG (123 aa). Residues 226-228, asparagine 296, histidine 297, and glutamate 356 each bind S-adenosyl-L-methionine; that span reads AGE.

This sequence belongs to the class V-like SAM-binding methyltransferase superfamily. Histone-lysine methyltransferase family. SET7 subfamily. Interacts with IPF1/PDX-1. As to expression, widely expressed. Expressed in pancreatic islets.

The protein resides in the nucleus. Its subcellular location is the chromosome. The enzyme catalyses L-lysyl(4)-[histone H3] + S-adenosyl-L-methionine = N(6)-methyl-L-lysyl(4)-[histone H3] + S-adenosyl-L-homocysteine + H(+). The catalysed reaction is L-lysyl-[protein] + S-adenosyl-L-methionine = N(6)-methyl-L-lysyl-[protein] + S-adenosyl-L-homocysteine + H(+). Histone methyltransferase that specifically monomethylates 'Lys-4' of histone H3. H3 'Lys-4' methylation represents a specific tag for epigenetic transcriptional activation. Plays a central role in the transcriptional activation of genes such as collagenase or insulin. Recruited by IPF1/PDX-1 to the insulin promoter, leading to activate transcription. Also has methyltransferase activity toward non-histone proteins such as CGAS, p53/TP53, TAF10, and possibly TAF7 by recognizing and binding the [KR]-[STA]-K in substrate proteins. Monomethylates 'Lys-189' of TAF10, leading to increase the affinity of TAF10 for RNA polymerase II. Monomethylates 'Lys-372' of p53/TP53, stabilizing p53/TP53 and increasing p53/TP53-mediated transcriptional activation. Monomethylates 'Lys-491' of CGAS, promoting interaction between SGF29 and CGAS. The sequence is that of Histone-lysine N-methyltransferase SETD7 (SETD7) from Homo sapiens (Human).